The primary structure comprises 152 residues: Ribosome maturation factor RimP (152 aa).

This sequence belongs to the RimP family.

Its subcellular location is the cytoplasm. Its function is as follows. Required for maturation of 30S ribosomal subunits. This is Ribosome maturation factor RimP from Pseudothermotoga lettingae (strain ATCC BAA-301 / DSM 14385 / NBRC 107922 / TMO) (Thermotoga lettingae).